The following is a 90-amino-acid chain: MVKNFSISVISKKENKENRGSIEFQILNFTKKIRRLTSHLKLHKKDFLSQKGLRKILGKRHRLLAYLSKKLKICYKDLIEKLEIRDTKTH.

It belongs to the universal ribosomal protein uS15 family. Part of the 30S ribosomal subunit.

Its subcellular location is the plastid. In Cuscuta reflexa (Southern Asian dodder), this protein is Small ribosomal subunit protein uS15c (rps15).